Reading from the N-terminus, the 407-residue chain is V-set and immunoglobulin domain-containing protein 1 (407 aa).

A signal peptide spans 1 to 22 (MMVFAFWKVFLILNCLAGQVSM). One can recognise an Ig-like V-type domain in the interval 23–134 (VQVTIPDTFV…HFVGKNQGLL (112 aa)). Topologically, residues 23–234 (VQVTIPDTFV…EIDLTSSHPE (212 aa)) are extracellular. The N-linked (GlcNAc...) asparagine glycan is linked to Asn39. Disulfide bonds link Cys44–Cys118 and Cys163–Cys213. In terms of domain architecture, Ig-like C2-type spans 145–229 (PFCTIQGRPE…GNSSCEIDLT (85 aa)). Asn202 and Asn221 each carry an N-linked (GlcNAc...) asparagine glycan. Residues 235–255 (VGIIIGALVGALIGAAVIICV) traverse the membrane as a helical segment. At 256-407 (VYFARNKVKS…SKAGEDTVKA (152 aa)) the chain is on the cytoplasmic side. Disordered regions lie at residues 268–289 (QKNL…PQQS) and 318–407 (TAVL…TVKA). Residues Ser273 and Ser274 each carry the phosphoserine modification. The span at 361-371 (DPETETEPEPE) shows a compositional bias: acidic residues.

It localises to the membrane. The protein is V-set and immunoglobulin domain-containing protein 1 (Vsig1) of Mus musculus (Mouse).